Consider the following 282-residue polypeptide: Shikimate dehydrogenase (NADP(+)) (282 aa).

Shikimate contacts are provided by residues 24–26 and threonine 71; that span reads SRS. Lysine 75 functions as the Proton acceptor in the catalytic mechanism. Position 87 (aspartate 87) interacts with NADP(+). Shikimate contacts are provided by asparagine 96 and aspartate 112. NADP(+) contacts are provided by residues 138–142, 162–167, and leucine 227; these read GAGGA and NRTRIR. Residue tyrosine 229 participates in shikimate binding. An NADP(+)-binding site is contributed by glycine 250.

The protein belongs to the shikimate dehydrogenase family. As to quaternary structure, homodimer.

The catalysed reaction is shikimate + NADP(+) = 3-dehydroshikimate + NADPH + H(+). It participates in metabolic intermediate biosynthesis; chorismate biosynthesis; chorismate from D-erythrose 4-phosphate and phosphoenolpyruvate: step 4/7. In terms of biological role, involved in the biosynthesis of the chorismate, which leads to the biosynthesis of aromatic amino acids. Catalyzes the reversible NADPH linked reduction of 3-dehydroshikimate (DHSA) to yield shikimate (SA). The polypeptide is Shikimate dehydrogenase (NADP(+)) (Paracoccus denitrificans (strain Pd 1222)).